A 245-amino-acid chain; its full sequence is Polynucleotide 3'-phosphatase (245 aa).

The protein belongs to the DNA 3' phosphatase family.

The protein resides in the nucleus. It catalyses the reaction a 3'end (2'-deoxyribonucleotide 3'-phosphate)-DNA + H2O = a 3'-end 2'-deoxyribonucleotide-DNA + phosphate. In terms of biological role, dephosphorylate DNA's 3'-phosphate termini. Has a role in the repair of breaks in single-stranded DNA. The sequence is that of Polynucleotide 3'-phosphatase (TPP1) from Saccharomyces mikatae (Yeast).